A 185-amino-acid chain; its full sequence is MISDLKKTTEQKMQKSIDALKTDLAKIRTGRAHTGLLDHVMVEYYGSMVPINQVANITLIDARTIGVQTWEKPMLGKVEKAIRDCDLGLNPANMGEIIRVPMPALTEERRRDLTKVVRQEGETAKVAVRNLRRDANQHLKDAVKDKTISEDDERRSQDDIQKLTDKYVAEIDKLLAQKEQELMQI.

The protein belongs to the RRF family.

It localises to the cytoplasm. Its function is as follows. Responsible for the release of ribosomes from messenger RNA at the termination of protein biosynthesis. May increase the efficiency of translation by recycling ribosomes from one round of translation to another. The sequence is that of Ribosome-recycling factor from Azoarcus sp. (strain BH72).